An 87-amino-acid chain; its full sequence is Cell division protein FtsL (87 aa).

Residues 1–3 are Cytoplasmic-facing; sequence MSR. A helical transmembrane segment spans residues 4–23; the sequence is LLLIVLLACSIASAIGVVYM. The Periplasmic portion of the chain corresponds to 24 to 87; the sequence is RHMHRKLFVQ…ETSDIVVIRP (64 aa).

Belongs to the FtsL family. As to quaternary structure, part of a complex composed of FtsB, FtsL and FtsQ.

The protein resides in the cell inner membrane. In terms of biological role, essential cell division protein. May link together the upstream cell division proteins, which are predominantly cytoplasmic, with the downstream cell division proteins, which are predominantly periplasmic. The sequence is that of Cell division protein FtsL from Xanthomonas campestris pv. campestris (strain ATCC 33913 / DSM 3586 / NCPPB 528 / LMG 568 / P 25).